We begin with the raw amino-acid sequence, 237 residues long: Alpha-S1-casein (237 aa).

The first 15 residues, 1–15 (MKLLIFSCLVTLALA), serve as a signal peptide directing secretion. Residues 39–60 (EDPIPVSEASSSEESVHQLNRD) form a disordered region. Phosphoserine occurs at positions 79, 80, and 81.

Belongs to the alpha-casein family. In terms of tissue distribution, mammary gland specific. Secreted in milk.

The protein resides in the secreted. Functionally, important role in the capacity of milk to transport calcium phosphate. The sequence is that of Alpha-S1-casein (CSN1S1) from Notamacropus eugenii (Tammar wallaby).